We begin with the raw amino-acid sequence, 70 residues long: LPSQHLCGSHLVEALYFVCGPKGFYYLPKAXXFVDSLAGYSKHQNGGISGIVEHCCHNTCSLFDLEGYCN.

3 cysteine pairs are disulfide-bonded: C7–C56, C19–C69, and C55–C60. Positions 33–49 are cleaved as a propeptide — c peptide; it reads FVDSLAGYSKHQNGGIS.

The protein belongs to the insulin family. As to quaternary structure, heterodimer of a B chain and an A chain linked by two disulfide bonds.

The protein resides in the secreted. Its function is as follows. Insulin decreases blood glucose concentration. It increases cell permeability to monosaccharides, amino acids and fatty acids. It accelerates glycolysis, the pentose phosphate cycle, and glycogen synthesis in liver. This is Insulin (ins) from Torpedo marmorata (Marbled electric ray).